Here is a 316-residue protein sequence, read N- to C-terminus: 4-hydroxy-3-methylbut-2-enyl diphosphate reductase (316 aa).

Position 12 (cysteine 12) interacts with [4Fe-4S] cluster. Residues histidine 41 and histidine 74 each contribute to the (2E)-4-hydroxy-3-methylbut-2-enyl diphosphate site. Residues histidine 41 and histidine 74 each coordinate dimethylallyl diphosphate. 2 residues coordinate isopentenyl diphosphate: histidine 41 and histidine 74. [4Fe-4S] cluster is bound at residue cysteine 96. Residue histidine 124 coordinates (2E)-4-hydroxy-3-methylbut-2-enyl diphosphate. Histidine 124 contributes to the dimethylallyl diphosphate binding site. Isopentenyl diphosphate is bound at residue histidine 124. Residue glutamate 126 is the Proton donor of the active site. A (2E)-4-hydroxy-3-methylbut-2-enyl diphosphate-binding site is contributed by threonine 167. [4Fe-4S] cluster is bound at residue cysteine 197. Serine 225, serine 226, asparagine 227, and serine 269 together coordinate (2E)-4-hydroxy-3-methylbut-2-enyl diphosphate. Positions 225, 226, 227, and 269 each coordinate dimethylallyl diphosphate. Isopentenyl diphosphate is bound by residues serine 225, serine 226, asparagine 227, and serine 269.

This sequence belongs to the IspH family. Homodimer. [4Fe-4S] cluster is required as a cofactor.

The catalysed reaction is isopentenyl diphosphate + 2 oxidized [2Fe-2S]-[ferredoxin] + H2O = (2E)-4-hydroxy-3-methylbut-2-enyl diphosphate + 2 reduced [2Fe-2S]-[ferredoxin] + 2 H(+). It catalyses the reaction dimethylallyl diphosphate + 2 oxidized [2Fe-2S]-[ferredoxin] + H2O = (2E)-4-hydroxy-3-methylbut-2-enyl diphosphate + 2 reduced [2Fe-2S]-[ferredoxin] + 2 H(+). It participates in isoprenoid biosynthesis; dimethylallyl diphosphate biosynthesis; dimethylallyl diphosphate from (2E)-4-hydroxy-3-methylbutenyl diphosphate: step 1/1. It functions in the pathway isoprenoid biosynthesis; isopentenyl diphosphate biosynthesis via DXP pathway; isopentenyl diphosphate from 1-deoxy-D-xylulose 5-phosphate: step 6/6. Functionally, catalyzes the conversion of 1-hydroxy-2-methyl-2-(E)-butenyl 4-diphosphate (HMBPP) into a mixture of isopentenyl diphosphate (IPP) and dimethylallyl diphosphate (DMAPP). Acts in the terminal step of the DOXP/MEP pathway for isoprenoid precursor biosynthesis. This chain is 4-hydroxy-3-methylbut-2-enyl diphosphate reductase, found in Shigella flexneri serotype 5b (strain 8401).